The chain runs to 541 residues: MTATVQHTVKTEVCLRGDVASQPISDSKPPTWVAVLQQHEYQSSVTYHKLDDNRLIPDVFGYSYLRDIADQGKKQSTGKQHARVIQAYSKIHSLLSPPWKSSSIDSNTKTRENKGSPVILEDKRCAFIERLEPPPNSKADIVSTVFAQVNLQTPTGPPLEQFLSCRASNIKANDLKNAAEGVRRPITISTGICLFSSRLLGFIPTNGLSVSHDATETVVPPLPYTTVATFYELETCTRMAMTIAGLAVTASTGGTAGSRPIVVRLDVPNLQYYCYPLELLEAGLVSWEYVEEWFRLVDRRHRQVATLLKDTIIHEVRRRNCDVQVDVTSGTIAATQLLRLCVLGRRKIPSVNDMLFVLSWIGPYQAAWREFLAIVDDCQRPKDLRSLALMAYVFEVMYPALQQATTKTKTPHGKGEESSGRPLLIQVDDIAEWRIFDRAEMLLKRFKHRQHGLDPLLVGVFPSPRIFTSEDQGRSTLFLHDPGLKISQTRPPSSGGDSEDHSCVVGPLDIIGQIYGAEVQDTLMRLIIERGLSPEDEFELD.

A Conserved DDXXE motif motif is present at residues Asp-428–Glu-432.

It belongs to the arginine-containing cyclodipeptide synthase family.

It catalyses the reaction L-tryptophyl-tRNA(Trp) + L-arginyl-tRNA(Arg) = cyclo(L-arginyl-L-tryptophyl) + tRNA(Trp) + tRNA(Arg) + H(+). It participates in secondary metabolite biosynthesis. In terms of biological role, arginine-containing cyclodipeptide synthase; part of the cluster that mediates the biosynthesis of a highly modified cyclo-arginine-tryptophan dipeptide (cRW). Within the pathway, avaA acts as the scaffold-generating enzyme and is responsible for formation of the cyclo-Arg-Trp diketopiperazine (cRW) from L-arginyl-tRNA(Arg) + L-tryptophanyl-tRNA(Trp). AvaB then acts as a multifunctional flavoenzyme that is responsible for generating the cyclo-Arg-formylkynurenine DKP, which can be deformylated by avaC. AvaB then catalyzes an additional N-oxidation followed by cyclization and dehydration. The next step is an N-acetylation of the guanidine group catalyzed by the arginine N-acetyltransferase AvaD. The role of the additional enzymes identified within the ava cluster still have to be determined. This chain is Arginine-containing cyclodipeptide synthase avaA, found in Aspergillus versicolor.